The chain runs to 102 residues: uncharacterized protein (102 aa).

2 helical membrane-spanning segments follow: residues A24–T44 and I55–L75.

The protein localises to the cell membrane. This is an uncharacterized protein from Bacillus subtilis (strain 168).